Reading from the N-terminus, the 29-residue chain is Cytochrome b6-f complex subunit 8 (29 aa).

Residues 3–23 (IVSLAWAGLMVVFTFSLSLVV) form a helical membrane-spanning segment.

It belongs to the PetN family. The 4 large subunits of the cytochrome b6-f complex are cytochrome b6, subunit IV (17 kDa polypeptide, PetD), cytochrome f and the Rieske protein, while the 4 small subunits are PetG, PetL, PetM and PetN. The complex functions as a dimer.

It localises to the plastid. Its subcellular location is the chloroplast thylakoid membrane. Its function is as follows. Component of the cytochrome b6-f complex, which mediates electron transfer between photosystem II (PSII) and photosystem I (PSI), cyclic electron flow around PSI, and state transitions. The chain is Cytochrome b6-f complex subunit 8 from Arabis hirsuta (Hairy rock-cress).